The following is a 629-amino-acid chain: tRNA uridine 5-carboxymethylaminomethyl modification enzyme MnmG (629 aa).

FAD contacts are provided by residues 13–18 (GGGHAG), Val-125, and Ser-180. 273–287 (GPRYCPSIEDKVMRF) serves as a coordination point for NAD(+). Gln-370 is an FAD binding site.

It belongs to the MnmG family. In terms of assembly, homodimer. Heterotetramer of two MnmE and two MnmG subunits. FAD is required as a cofactor.

Its subcellular location is the cytoplasm. Functionally, NAD-binding protein involved in the addition of a carboxymethylaminomethyl (cmnm) group at the wobble position (U34) of certain tRNAs, forming tRNA-cmnm(5)s(2)U34. In Citrobacter koseri (strain ATCC BAA-895 / CDC 4225-83 / SGSC4696), this protein is tRNA uridine 5-carboxymethylaminomethyl modification enzyme MnmG.